The primary structure comprises 944 residues: MASNLISRLLPSNTQGRSIYDSLRAHDEASGSDMDVEERAAMAIDEENLRFKDDELGNPADVISGESVTESTAFLSDQQQTPQKQGYNRKGKGKGRSHNLAESPRLLEEDSDDDVPASLLIEGNNRHADPETPNHIRARQTALPKRAPAVPGPSAQQIKEERDRAHWEMTQEQQKLHEDGGNRATGVPHTPQSIPQNTGFYLTGSPKDKAMYRWVNVTNLDNFIGDLYAYFEGAGIWCIVLAKVIDILTLVFVAVFTTFLTQCVDYKKIYRGDARSLEYALVPQCTKKISGMSNVAIWLVCLFVLYRVYQLLTDLPRLMKMRDFFTYLLEIQDSNMQTVSFQDVIARLMALRDANPMTVERISPDNRKFVLGTQSKQRLDAHDIANRLMRKENYLIALFNKEILDLTLPLPFLQGRQLFSKTLQWNLEWCILDFVFNDYGQVRQLVLKDSHRRELSDGLRNRFLFAGLMNVICAPVIVIYVVIVYFFKYFNQYHKNPAALGSRGYTPLAEWKFREFNELHHLFNKRLNMSYPFASRYLNQFPNVKTAHMAKFITFMAGAVVSVLVVATVWDSEVLAGFDITSERPVLFYIGVFGSLWAITNGMIPEENEVFDPEYALRQVIEYTHYMPNHWQDRLHSDEVKREFSTLYQLKLMIFIEEVFSIIITPFLLWFSLPKCADQIIDFFREFTVHVDGVGYVCSFAVFDFKKGDGRAPTQGKAKSDMREDYYSTKHGKMAASYYNFLDNYLLNPKTGVPGHNPPGLRQQFYPPPAFPGLISSPTSGADLQSSRMGRSDVRPMNRAPYVPQQAVRTPRFPSNTTATGSPMASILLDPRHQPPSSELGARSVRRSSRSRYQARRGNNIIEDPMEDENGPGRPVAQPGRSYAVDDTVANLGESTWEVSPAKADADGQDEEEDGDGTGGAGVLGLVYQFQKAQTNGRPGVSIW.

Residues 1 to 235 (MASNLISRLL…DLYAYFEGAG (235 aa)) lie on the Cytoplasmic side of the membrane. The segment covering 70–86 (ESTAFLSDQQQTPQKQG) has biased composition (polar residues). 2 disordered regions span residues 70 to 113 (ESTA…DSDD) and 142 to 199 (ALPK…QNTG). The span at 87 to 97 (YNRKGKGKGRS) shows a compositional bias: basic residues. A compositionally biased stretch (basic and acidic residues) spans 158–181 (IKEERDRAHWEMTQEQQKLHEDGG). Residues 190–199 (TPQSIPQNTG) show a composition bias toward polar residues. A helical transmembrane segment spans residues 236 to 256 (IWCIVLAKVIDILTLVFVAVF). Topologically, residues 257-294 (TTFLTQCVDYKKIYRGDARSLEYALVPQCTKKISGMSN) are lumenal. A helical membrane pass occupies residues 295 to 315 (VAIWLVCLFVLYRVYQLLTDL). Topologically, residues 316–462 (PRLMKMRDFF…RELSDGLRNR (147 aa)) are cytoplasmic. Residues 463–483 (FLFAGLMNVICAPVIVIYVVI) lie within the membrane without spanning it. Residues 484-549 (VYFFKYFNQY…QFPNVKTAHM (66 aa)) are Cytoplasmic-facing. The chain crosses the membrane as a helical span at residues 550 to 570 (AKFITFMAGAVVSVLVVATVW). Over 571–584 (DSEVLAGFDITSER) the chain is Lumenal. The helical transmembrane segment at 585 to 605 (PVLFYIGVFGSLWAITNGMIP) threads the bilayer. Topologically, residues 606–651 (EENEVFDPEYALRQVIEYTHYMPNHWQDRLHSDEVKREFSTLYQLK) are cytoplasmic. An intramembrane segment occupies 652-672 (LMIFIEEVFSIIITPFLLWFS). The Cytoplasmic segment spans residues 673 to 944 (LPKCADQIID…TNGRPGVSIW (272 aa)). 2 disordered regions span residues 753 to 881 (VPGH…QPGR) and 894 to 922 (ESTW…GGAG). Polar residues-rich tracts occupy residues 776–789 (SSPT…SSRM) and 813–823 (FPSNTTATGSP). Residues 844-855 (SVRRSSRSRYQA) are compositionally biased toward basic residues. Positions 907-916 (DGQDEEEDGD) are enriched in acidic residues.

It belongs to the ATG9 family. As to quaternary structure, homotrimer; forms a homotrimer with a central pore that forms a path between the two membrane leaflets. In terms of processing, phosphorylated by atg1. Atg1 phosphorylation is required for preautophagosome elongation.

It is found in the preautophagosomal structure membrane. The protein resides in the cytoplasmic vesicle membrane. The protein localises to the golgi apparatus membrane. It localises to the endoplasmic reticulum membrane. It carries out the reaction a 1,2-diacyl-sn-glycero-3-phosphocholine(in) = a 1,2-diacyl-sn-glycero-3-phosphocholine(out). It catalyses the reaction a 1,2-diacyl-sn-glycero-3-phospho-L-serine(in) = a 1,2-diacyl-sn-glycero-3-phospho-L-serine(out). The enzyme catalyses a 1,2-diacyl-sn-glycero-3-phosphoethanolamine(in) = a 1,2-diacyl-sn-glycero-3-phosphoethanolamine(out). The catalysed reaction is a 1,2-diacyl-sn-glycero-3-phospho-(1D-myo-inositol-3-phosphate)(in) = a 1,2-diacyl-sn-glycero-3-phospho-(1D-myo-inositol-3-phosphate)(out). Its function is as follows. Phospholipid scramblase involved in autophagy and cytoplasm to vacuole transport (Cvt) vesicle formation. Cycles between the preautophagosomal structure/phagophore assembly site (PAS) and the cytoplasmic vesicle pool and supplies membrane for the growing autophagosome. Lipid scramblase activity plays a key role in preautophagosomal structure/phagophore assembly by distributing the phospholipids that arrive through atg2 from the cytoplasmic to the luminal leaflet of the bilayer, thereby driving autophagosomal membrane expansion. Required for mitophagy. Also involved in endoplasmic reticulum-specific autophagic process and is essential for the survival of cells subjected to severe ER stress. Different machineries are required for anterograde trafficking to the PAS during either the Cvt pathway or bulk autophagy and for retrograde trafficking. The polypeptide is Autophagy-related protein 9 (atg9) (Sclerotinia sclerotiorum (strain ATCC 18683 / 1980 / Ss-1) (White mold)).